Consider the following 360-residue polypeptide: MEPTSSAAMARQTWELENNIPAAASDPDALDAIYRYDEAAQARVQQEKPWANDPHPFRRAKISALALLKMVVHARAGGTIEVMGLMQGKCEGDAIVVMDAFALPVEGTETRVNAQADAYEYMVEYSTINKQAGRLENVVGWYHSHPGYGCWLSGIDVSTQMLNQQFQEPFLAVVIDPTRTVSAGKVEIGAFRTYPKDYKPPDEPVSEYQTIPLNKIEDFGVHCKQYYALDITYFKSSLDSHLLDLLWNKYWVNTLSSSPLLGNRDYVAGQIFDLADKLEQAEGQLAHSRYGMLMPSQRKKEQEESPLAKVTRDSSKITAEQVHGLMSQVIKDILFNSVHPSNKASTSAPDSSGPEPMVEA.

Residues 60 to 197 (AKISALALLK…IGAFRTYPKD (138 aa)) enclose the MPN domain. Zn(2+) contacts are provided by histidine 143, histidine 145, and aspartate 156. Positions 143-156 (HSHPGYGCWLSGID) match the JAMM motif motif. 2 disordered regions span residues 293–315 (LMPS…RDSS) and 341–360 (SNKA…MVEA). A compositionally biased stretch (polar residues) spans 341-350 (SNKASTSAPD).

The protein belongs to the peptidase M67A family. CSN5 subfamily. In terms of assembly, component of the CSN complex, probably composed of CSN1, CSN2, CSN3, CSN4, CSN5, CSN6, CSN7 and CSN8. Interacts with MCM2.

Its function is as follows. Probable protease subunit of the COP9 signalosome complex (CSN), a complex involved in various cellular and developmental processes such as photomorphogenesis and response to hormones. The CSN complex is an essential regulator of the ubiquitin (Ubl) conjugation pathway by mediating the deneddylation of the cullin subunits of SCF-type E3 ligase complexes, leading to decrease the Ubl ligase activity of SCF. Involved in early response to iron deficiency. This is COP9 signalosome complex subunit 5 from Oryza sativa subsp. japonica (Rice).